Here is a 584-residue protein sequence, read N- to C-terminus: Adenine deaminase (584 aa).

This sequence belongs to the metallo-dependent hydrolases superfamily. Adenine deaminase family. Mn(2+) is required as a cofactor.

The catalysed reaction is adenine + H2O + H(+) = hypoxanthine + NH4(+). The polypeptide is Adenine deaminase (Methanococcoides burtonii (strain DSM 6242 / NBRC 107633 / OCM 468 / ACE-M)).